The chain runs to 275 residues: Hemin import ATP-binding protein HmuV (275 aa).

The region spanning 2–242 is the ABC transporter domain; it reads LKAAGIGVRL…EWIETGFGLQ (241 aa). 34–41 contacts ATP; it reads GPNGAGKS.

This sequence belongs to the ABC transporter superfamily. Heme (hemin) importer (TC 3.A.1.14.5) family. In terms of assembly, the complex is composed of two ATP-binding proteins (HmuV), two transmembrane proteins (HmuU) and a solute-binding protein (HmuT).

Its subcellular location is the cell inner membrane. In terms of biological role, part of the ABC transporter complex HmuTUV involved in hemin import. Responsible for energy coupling to the transport system. The protein is Hemin import ATP-binding protein HmuV of Gloeobacter violaceus (strain ATCC 29082 / PCC 7421).